The primary structure comprises 225 residues: Pathogenesis-related 5 protein Jun a 3.0101 (225 aa).

The N-terminal stretch at 1–26 is a signal peptide; it reads MARVSELAFLLAATLAISLHMQEAGV. 8 disulfide bridges follow: C35-C224, C76-C86, C91-C97, C139-C213, C144-C197, C152-C162, C166-C175, and C176-C184. 3 igE-binding regions span residues 146–157, 158–170, and 178–191; these read ADINAVCPSELK, VDGG…NVFK, and NAYV…NYSK.

Belongs to the thaumatin family. Expressed in pollen (at protein level).

The protein is Pathogenesis-related 5 protein Jun a 3.0101 of Juniperus ashei (Ozark white cedar).